The chain runs to 769 residues: MINIKDISKSSNQSEEKSLKGTSSKTKYPFAAKSLFKGSNNITPYYLSTSNTFQCVASESIQTWLLSDDGHIFTSSGNFVLDVSSGGYFVELVQLNSNSKTQIWTIDTTNNKIQNQGNGKYLDIDNLKICVAPLNGNATQKWTTFRRAPIPTGNWGYFQSKQLDSNNNYWGLSVLNNSKSYNTSVVMNKVQAKSIGQIWQMTNDGHILSRLDGNLVLDIGPSINGSKTNYYLDTNVYKANDLKQQWGINENNQIFNQYYPNLCIGFVGELGVDSTVNCVLAQPSSASDINFQWITNPTYSLNEIVSEVPEPFPAYTSGDLLASYQYISNIATNGHTDDIRSLYTSINVSLEIFYVNVTNATCPSSIHSTEDFSNVQNQIKNELTYAITVRLVFENYSGFYSKLFSQGSTNLTNLANLINVDMSSDQVVNGDYTDAITSVFYAIISEIPIGGSIIANIGESAVEFGELYAESNDSGPSTYQVTLSKLYDHLNENYENEMTNAQSMKNTILQDWGMMSKTFALCFLPTKNPSSLNINGLDFQKISTIASLAYQTAMIQMLLPTNYQIYFTPAGYYAPVSSDDYSYTDSTGTYIMAEIDNCNSYPPKALTDKLWNNGVSKQEVFTSSYGWNLATSVTYYNMVDKYSGMFKLSFPTVKNFTSVPMQFVMTNGSDRVGTFNVKTHFAGLASTYYYSGALGHHYYDIAVTDIDGNKVANFTVDNNLEALEGSYVSIKTGSLVVQPGYVVGNPTCNQGSFSQGFAASILIPIYKSN.

Positions Met1–Gly21 are disordered. 2 Ricin B-type lectin domains span residues Lys25–Phe145 and Gln116–Asn249.

It belongs to the cup family.

It is found in the cytoplasm. The protein resides in the membrane. Its function is as follows. May play an important role in stabilizing and/or regulating the cell membrane during Ca(2+) stress or certain stages of development. In Dictyostelium discoideum (Social amoeba), this protein is Calcium up-regulated protein F (cupF).